The following is a 141-amino-acid chain: ATP synthase epsilon chain (141 aa).

The protein belongs to the ATPase epsilon chain family. In terms of assembly, F-type ATPases have 2 components, CF(1) - the catalytic core - and CF(0) - the membrane proton channel. CF(1) has five subunits: alpha(3), beta(3), gamma(1), delta(1), epsilon(1). CF(0) has three main subunits: a, b and c.

The protein localises to the cell membrane. Its function is as follows. Produces ATP from ADP in the presence of a proton gradient across the membrane. This is ATP synthase epsilon chain (atpC) from Mycoplasmopsis pulmonis (strain UAB CTIP) (Mycoplasma pulmonis).